The following is a 217-amino-acid chain: 2-phospho-L-lactate guanylyltransferase (217 aa).

Belongs to the CofC family. Homodimer.

It catalyses the reaction (2S)-2-phospholactate + GTP + H(+) = (2S)-lactyl-2-diphospho-5'-guanosine + diphosphate. The protein operates within cofactor biosynthesis; coenzyme F420 biosynthesis. Guanylyltransferase that catalyzes the activation of (2S)-2-phospholactate (2-PL) as (2S)-lactyl-2-diphospho-5'-guanosine, via the condensation of 2-PL with GTP. It is involved in the biosynthesis of coenzyme F420, a hydride carrier cofactor. The protein is 2-phospho-L-lactate guanylyltransferase of Halorubrum lacusprofundi (strain ATCC 49239 / DSM 5036 / JCM 8891 / ACAM 34).